Here is a 300-residue protein sequence, read N- to C-terminus: DNA repair protein PprA (300 aa).

A Phosphothreonine modification is found at threonine 88. Residue serine 128 is modified to Phosphoserine. Threonine 160 is modified (phosphothreonine).

Phosphorylated by RqkA in vitro. Phosphorylated primarily at Thr-88, and to a little extent at Ser-128 and Thr-160.

Phosphorylation increases DNA binding affinity. In terms of biological role, dsDNA-binding protein that contributes to the ionizing radiation resistance of D.radiodurans. Plays a role in DNA repair and genome reconstitution, and is necessary for recovery from severe genomic fragmentation as a result of exposure to severe levels of ionizing radiation. In vitro, binds to double-stranded DNA carrying strand breaks and stimulates the DNA end-joining reaction catalyzed by DNA ligases. Thus, PprA plays a critical role in a non-homologous end-joining (NHEJ) pathway for the repair of radiation-induced DNA double-strands breaks. Cannot bind to dsDNA without strand breaks or single-stranded DNA. The sequence is that of DNA repair protein PprA (pprA) from Deinococcus radiodurans (strain ATCC 13939 / DSM 20539 / JCM 16871 / CCUG 27074 / LMG 4051 / NBRC 15346 / NCIMB 9279 / VKM B-1422 / R1).